The sequence spans 64 residues: SGRGKNCGGACNSNPCSCGNDCKCGAGCNCDRCSSCHCSNDDCKCGSQCTGSGSCKCGSACGCK.

An N-acetylserine modification is found at S1. Cu(+)-binding residues include C7, C11, C16, C18, C22, C24, C28, C30, C33, C36, C38, C43, C45, C49, C55, C57, C61, and C63.

The protein belongs to the metallothionein superfamily. Type 2 family.

In terms of biological role, the metallothioneins are involved in the cellular sequestration of toxic metal ions and regulation of essential trace elements. This isoform binds exclusively copper. In Helix pomatia (Roman snail), this protein is Copper-metallothionein.